We begin with the raw amino-acid sequence, 88 residues long: MRESNTLSGGIFALLNRAIGSVLLALIGFYRTWLSPLLGPHCRFIPSCSAYGLEAIQRHGPWRGGWLTLRRLSRCHPFTPCGCDPVPD.

It belongs to the UPF0161 family.

Its subcellular location is the cell inner membrane. In terms of biological role, could be involved in insertion of integral membrane proteins into the membrane. This chain is Putative membrane protein insertion efficiency factor, found in Prochlorococcus marinus (strain MIT 9313).